Consider the following 131-residue polypeptide: ER membrane protein complex subunit 5 (131 aa).

Residues 1 to 3 are Cytoplasmic-facing; the sequence is MAP. A helical transmembrane segment spans residues 4–22; the sequence is SLWKGLVGIGLFALAHAAF. At 23 to 43 the chain is on the lumenal side; the sequence is SAAQHRSYMRLTEKEDESLPI. Residues 44 to 63 traverse the membrane as a helical segment; the sequence is DIVLQTLLAFAVTCYGIVHI. Topologically, residues 64-131 are cytoplasmic; that stretch reads AGEFKDMDAT…KLRKLESLRR (68 aa). Ser-120 carries the post-translational modification Phosphoserine.

It belongs to the membrane magnesium transporter (TC 1.A.67) family. In terms of assembly, component of the ER membrane protein complex (EMC).

It localises to the endoplasmic reticulum membrane. The protein localises to the golgi apparatus membrane. Its subcellular location is the early endosome membrane. Functionally, part of the endoplasmic reticulum membrane protein complex (EMC) that enables the energy-independent insertion into endoplasmic reticulum membranes of newly synthesized membrane proteins. Preferentially accommodates proteins with transmembrane domains that are weakly hydrophobic or contain destabilizing features such as charged and aromatic residues. Involved in the cotranslational insertion of multi-pass membrane proteins in which stop-transfer membrane-anchor sequences become ER membrane spanning helices. It is also required for the post-translational insertion of tail-anchored/TA proteins in endoplasmic reticulum membranes. By mediating the proper cotranslational insertion of N-terminal transmembrane domains in an N-exo topology, with translocated N-terminus in the lumen of the ER, controls the topology of multi-pass membrane proteins like the G protein-coupled receptors. By regulating the insertion of various proteins in membranes, it is indirectly involved in many cellular processes. May be involved in Mg(2+) transport. The chain is ER membrane protein complex subunit 5 from Homo sapiens (Human).